Reading from the N-terminus, the 316-residue chain is NAC domain-containing protein 22 (316 aa).

The 154-residue stretch at 17 to 170 (DLPGFRFHPT…DMVLCKIYRK (154 aa)) folds into the NAC domain. The DNA-binding element occupies 117 to 176 (IGLKKTLVFYQGRAPRGTKTDWVMNEYRLPDYGAARAAAPPPKEDMVLCKIYRKATPLKE). Residues 229 to 260 (QSSSSSAAPSGSSSKNGGAGAPREAKKEEADV) are disordered. Residues 230 to 244 (SSSSSAAPSGSSSKN) are compositionally biased toward low complexity.

Its subcellular location is the nucleus. In terms of biological role, transcription activator that binds sequence-specific DNA motifs. Involved in stress response. Plays a positive role in drought and salt stress tolerance through the modulation of abscisic acid-mediated signaling. The chain is NAC domain-containing protein 22 from Oryza sativa subsp. japonica (Rice).